The following is a 160-amino-acid chain: Sec-independent protein translocase protein TatB (160 aa).

The chain crosses the membrane as a helical span at residues 1 to 21 (MFGMGFFEILVVLVVAIIFLG). The segment at 118-160 (HLNEEVSNEEALNKEVSSDESPKEVQLATDNNTKEHDKEKENV) is disordered. Basic and acidic residues-rich tracts occupy residues 128–140 (ALNKEVSSDESPK) and 149–160 (NTKEHDKEKENV).

It belongs to the TatB family. The Tat system comprises two distinct complexes: a TatABC complex, containing multiple copies of TatA, TatB and TatC subunits, and a separate TatA complex, containing only TatA subunits. Substrates initially bind to the TatABC complex, which probably triggers association of the separate TatA complex to form the active translocon.

The protein resides in the cell inner membrane. Its function is as follows. Part of the twin-arginine translocation (Tat) system that transports large folded proteins containing a characteristic twin-arginine motif in their signal peptide across membranes. Together with TatC, TatB is part of a receptor directly interacting with Tat signal peptides. TatB may form an oligomeric binding site that transiently accommodates folded Tat precursor proteins before their translocation. The polypeptide is Sec-independent protein translocase protein TatB (Helicobacter pylori (strain ATCC 700392 / 26695) (Campylobacter pylori)).